A 394-amino-acid polypeptide reads, in one-letter code: Carbamoyltransferase HypF homolog (394 aa).

It belongs to the carbamoyltransferase HypF family.

The polypeptide is Carbamoyltransferase HypF homolog (hypF1) (Cupriavidus necator (strain ATCC 17699 / DSM 428 / KCTC 22496 / NCIMB 10442 / H16 / Stanier 337) (Ralstonia eutropha)).